Reading from the N-terminus, the 184-residue chain is UPF0398 protein BC_1561 (184 aa).

This sequence belongs to the UPF0398 family.

In Bacillus cereus (strain ATCC 14579 / DSM 31 / CCUG 7414 / JCM 2152 / NBRC 15305 / NCIMB 9373 / NCTC 2599 / NRRL B-3711), this protein is UPF0398 protein BC_1561.